We begin with the raw amino-acid sequence, 470 residues long: Serine/threonine-protein kinase PEPKR2 (470 aa).

The region spanning 107-355 (YVFGRNIGKG…ADEVLRHPWI (249 aa)) is the Protein kinase domain. ATP-binding positions include 113-121 (IGKGKFGSV) and Lys136. Asp224 functions as the Proton acceptor in the catalytic mechanism. Residues 377–386 (GSSTCLQNRS) show a composition bias toward polar residues. Disordered regions lie at residues 377–419 (GSST…EEED) and 441–464 (RSRV…TSTS). A compositionally biased stretch (basic and acidic residues) spans 387-403 (PTEKTDLNRADREKKIP). Polar residues predominate over residues 445–464 (CSPTNNPIEQQHSSNLTSTS).

The protein belongs to the protein kinase superfamily. Ser/Thr protein kinase family.

The enzyme catalyses L-seryl-[protein] + ATP = O-phospho-L-seryl-[protein] + ADP + H(+). The catalysed reaction is L-threonyl-[protein] + ATP = O-phospho-L-threonyl-[protein] + ADP + H(+). This is Serine/threonine-protein kinase PEPKR2 (PEPKR2) from Arabidopsis thaliana (Mouse-ear cress).